We begin with the raw amino-acid sequence, 117 residues long: 3',5'-cyclic-AMP phosphodiesterase 4A (117 aa).

The disordered stretch occupies residues 42-79; sequence KQNEVEIPSPTMKDREPQEAPRQRPCQQLPPPVPHLQP. Residues 53 to 63 are compositionally biased toward basic and acidic residues; that stretch reads MKDREPQEAPR. The tract at residues 78–117 is catalytic; sequence QPMSQITGVKRLSHNSGLNNASIPRFGVKTDQEELLAQEL.

This sequence belongs to the cyclic nucleotide phosphodiesterase family. PDE4 subfamily. Interacts with LYN (via SH3 domain). Interacts with ARRB2. It depends on Zn(2+) as a cofactor. The cofactor is Mg(2+). Requires Mn(2+) as cofactor. Proteolytically cleaved by CASP3.

The protein resides in the cytoplasm. It is found in the cytosol. The protein localises to the membrane. The catalysed reaction is 3',5'-cyclic AMP + H2O = AMP + H(+). The protein operates within purine metabolism; 3',5'-cyclic AMP degradation; AMP from 3',5'-cyclic AMP: step 1/1. Its function is as follows. Hydrolyzes the second messenger 3',5'-cyclic AMP (cAMP), which is a key regulator of many important physiological processes. The sequence is that of 3',5'-cyclic-AMP phosphodiesterase 4A (PDE4A) from Cavia porcellus (Guinea pig).